Reading from the N-terminus, the 132-residue chain is DNA-directed RNA polymerase subunit omega (132 aa).

The tract at residues 90–109 (SSEAGGVLGTSSEEEGSSFD) is disordered.

Belongs to the RNA polymerase subunit omega family. As to quaternary structure, the RNAP catalytic core consists of 2 alpha, 1 beta, 1 beta' and 1 omega subunit. When a sigma factor is associated with the core the holoenzyme is formed, which can initiate transcription.

The enzyme catalyses RNA(n) + a ribonucleoside 5'-triphosphate = RNA(n+1) + diphosphate. Its function is as follows. Promotes RNA polymerase assembly. Latches the N- and C-terminal regions of the beta' subunit thereby facilitating its interaction with the beta and alpha subunits. This Bartonella henselae (strain ATCC 49882 / DSM 28221 / CCUG 30454 / Houston 1) (Rochalimaea henselae) protein is DNA-directed RNA polymerase subunit omega.